Consider the following 689-residue polypeptide: Solute carrier family 22 member 23 (689 aa).

Disordered regions lie at residues 1–55 and 162–188; these read MAID…PLPA and TASW…GKGN. N-linked (GlcNAc...) asparagine glycosylation occurs at Asn-24. A compositionally biased stretch (polar residues) spans 165–177; sequence WGTTSNRSNSSDT. Transmembrane regions (helical) follow at residues 229–249 and 253–273; these read FSLL…ADWV and PVLL…ALSV. Asn-274 carries an N-linked (GlcNAc...) asparagine glycan. The next 8 helical transmembrane spans lie at 283–303, 310–330, 339–359, 466–486, 489–509, 541–561, 572–592, and 601–621; these read FFEG…RIEL, FIIT…MPGL, VLQA…SIFP, TMAS…KFLG, GGLL…LGLL, IAFS…SVFF, CGGL…APII, and FLHH…ILLL.

Belongs to the major facilitator (TC 2.A.1) superfamily. Organic cation transporter (TC 2.A.1.19) family.

It localises to the membrane. The protein is Solute carrier family 22 member 23 (Slc22a23) of Mus musculus (Mouse).